The following is a 747-amino-acid chain: DNA ligase (747 aa).

NAD(+)-binding positions include 113-117 (DRAYD), 161-162 (SI), and glutamate 190. The active-site N6-AMP-lysine intermediate is the lysine 192. Arginine 213, glutamate 249, lysine 364, and lysine 388 together coordinate NAD(+). Zn(2+)-binding residues include cysteine 479, cysteine 482, cysteine 495, and cysteine 501. A BRCT domain is found at 660–747 (TTNAPLSDLT…EHDDTLTWPP (88 aa)).

Belongs to the NAD-dependent DNA ligase family. LigA subfamily. It depends on Mg(2+) as a cofactor. The cofactor is Mn(2+).

The enzyme catalyses NAD(+) + (deoxyribonucleotide)n-3'-hydroxyl + 5'-phospho-(deoxyribonucleotide)m = (deoxyribonucleotide)n+m + AMP + beta-nicotinamide D-nucleotide.. Its function is as follows. DNA ligase that catalyzes the formation of phosphodiester linkages between 5'-phosphoryl and 3'-hydroxyl groups in double-stranded DNA using NAD as a coenzyme and as the energy source for the reaction. It is essential for DNA replication and repair of damaged DNA. This is DNA ligase from Haloquadratum walsbyi (strain DSM 16790 / HBSQ001).